The sequence spans 427 residues: 3-phosphoshikimate 1-carboxyvinyltransferase (427 aa).

K22, S23, and R27 together coordinate 3-phosphoshikimate. A phosphoenolpyruvate-binding site is contributed by K22. Phosphoenolpyruvate-binding residues include G93 and R122. 3-phosphoshikimate-binding residues include S167, Q169, D315, and K342. Q169 lines the phosphoenolpyruvate pocket. D315 functions as the Proton acceptor in the catalytic mechanism. Phosphoenolpyruvate-binding residues include R346 and R387.

It belongs to the EPSP synthase family. In terms of assembly, monomer.

The protein resides in the cytoplasm. The enzyme catalyses 3-phosphoshikimate + phosphoenolpyruvate = 5-O-(1-carboxyvinyl)-3-phosphoshikimate + phosphate. Its pathway is metabolic intermediate biosynthesis; chorismate biosynthesis; chorismate from D-erythrose 4-phosphate and phosphoenolpyruvate: step 6/7. Functionally, catalyzes the transfer of the enolpyruvyl moiety of phosphoenolpyruvate (PEP) to the 5-hydroxyl of shikimate-3-phosphate (S3P) to produce enolpyruvyl shikimate-3-phosphate and inorganic phosphate. This chain is 3-phosphoshikimate 1-carboxyvinyltransferase, found in Thermus thermophilus (strain ATCC BAA-163 / DSM 7039 / HB27).